A 344-amino-acid chain; its full sequence is Phenylalanine--tRNA ligase alpha subunit (344 aa).

Glu256 contacts Mg(2+).

This sequence belongs to the class-II aminoacyl-tRNA synthetase family. Phe-tRNA synthetase alpha subunit type 1 subfamily. As to quaternary structure, tetramer of two alpha and two beta subunits. Mg(2+) serves as cofactor.

It is found in the cytoplasm. It carries out the reaction tRNA(Phe) + L-phenylalanine + ATP = L-phenylalanyl-tRNA(Phe) + AMP + diphosphate + H(+). This chain is Phenylalanine--tRNA ligase alpha subunit, found in Onion yellows phytoplasma (strain OY-M).